A 1877-amino-acid chain; its full sequence is Proprotein convertase subtilisin/kexin type 5 (1877 aa).

A signal peptide spans 1-34; sequence MDWDWGNRCSRPGRRDLLCVLALLAGCLLPVCRT. A propeptide spanning residues 35–116 is cleaved from the precursor; the sequence is RVYTNHWAVK…QQVVKKRTKR (82 aa). Topologically, residues 117-1768 are extracellular; it reads DYDLSHAQST…EAEFYEHTKT (1652 aa). A Peptidase S8 domain is found at 136–455; the sequence is MWYMHCSDNT…FGLMDAEAMV (320 aa). Residues Asp-173 and His-214 each act as charge relay system in the active site. N-linked (GlcNAc...) asparagine glycosylation is found at Asn-227 and Asn-383. Residue Ser-388 is the Charge relay system of the active site. The 141-residue stretch at 463–603 folds into the P/Homo B domain; the sequence is TVPQQHVCVE…SLVLYGTSVQ (141 aa). Residues 521–523 carry the Cell attachment site motif; the sequence is RGD. 22 FU repeats span residues 632–682, 685–732, 736–779, 781–826, 834–881, 884–929, 931–981, 984–1030, 1034–1079, 1081–1123, 1127–1168, 1206–1248, 1252–1299, 1301–1345, 1347–1390, 1392–1438, 1442–1487, 1491–1536, 1540–1585, 1589–1636, 1640–1685, and 1691–1738; these read EDYA…GHYH, KKRC…GSYE, KNVC…GQFF, GHDC…SYYL, YKSC…GEYI, QGHC…WKFE, KKQC…GHYP, GHAC…GEFQ, YEEC…KTFG, KWEC…GFHG, LGEC…STWP, TSQN…GTWP, SGSC…GFYA, DGVC…KHVA, EGVC…SFYP, MRQC…GTYK, NDEC…VEYW, SHRC…GYHT, SQQC…GYYG, SGRC…HYYA, AQTC…GEYR, and NFNC…SHSR. A CRM (Cys-rich motif) region spans residues 638–1753; it reads CDPECSEVGC…CDCQSSTDEC (1116 aa). The N-linked (GlcNAc...) asparagine glycan is linked to Asn-667. 3 N-linked (GlcNAc...) asparagine glycosylation sites follow: Asn-754, Asn-804, and Asn-854. N-linked (GlcNAc...) asparagine glycans are attached at residues Asn-951 and Asn-1016. The N-linked (GlcNAc...) asparagine glycan is linked to Asn-1220. A glycan (N-linked (GlcNAc...) asparagine) is linked at Asn-1317. N-linked (GlcNAc...) asparagine glycosylation is present at Asn-1523. Asn-1711 and Asn-1733 each carry an N-linked (GlcNAc...) asparagine glycan. Residues 1769–1789 form a helical membrane-spanning segment; it reads ALLVTSGAMLLLLLGAAAVVW. Residues 1790-1877 lie on the Cytoplasmic side of the membrane; it reads RKSRSRPVAK…EYDDESYSYQ (88 aa). 2 AC regions span residues 1825–1844 and 1856–1877; these read VIEY…IVYM and YGLL…YSYQ.

This sequence belongs to the peptidase S8 family. As to expression, PC5A is expressed in most tissues but is most abundant in the intestine and adrenals. PC5B is expressed in the intestine, adrenals and lung but not in the brain.

The protein localises to the secreted. It localises to the endomembrane system. Functionally, serine endoprotease that processes various proproteins by cleavage at paired basic amino acids, recognizing the RXXX[KR]R consensus motif. Likely functions in the constitutive and regulated secretory pathways. Plays an essential role in pregnancy establishment by proteolytic activation of a number of important factors such as BMP2, CALD1 and alpha-integrins. May be responsible for the maturation of gastrointestinal peptides. May be involved in the cellular proliferation of adrenal cortex via the activation of growth factors. The sequence is that of Proprotein convertase subtilisin/kexin type 5 (Pcsk5) from Mus musculus (Mouse).